Consider the following 549-residue polypeptide: Dihydroxy-acid dehydratase (549 aa).

Residue Asp-78 coordinates Mg(2+). A [2Fe-2S] cluster-binding site is contributed by Cys-119. Mg(2+)-binding residues include Asp-120 and Lys-121. Lys-121 is modified (N6-carboxylysine). Cys-191 is a [2Fe-2S] cluster binding site. Position 441 (Glu-441) interacts with Mg(2+). The active-site Proton acceptor is the Ser-466.

This sequence belongs to the IlvD/Edd family. Homodimer. The cofactor is [2Fe-2S] cluster. Requires Mg(2+) as cofactor.

It catalyses the reaction (2R)-2,3-dihydroxy-3-methylbutanoate = 3-methyl-2-oxobutanoate + H2O. The enzyme catalyses (2R,3R)-2,3-dihydroxy-3-methylpentanoate = (S)-3-methyl-2-oxopentanoate + H2O. It functions in the pathway amino-acid biosynthesis; L-isoleucine biosynthesis; L-isoleucine from 2-oxobutanoate: step 3/4. The protein operates within amino-acid biosynthesis; L-valine biosynthesis; L-valine from pyruvate: step 3/4. Functions in the biosynthesis of branched-chain amino acids. Catalyzes the dehydration of (2R,3R)-2,3-dihydroxy-3-methylpentanoate (2,3-dihydroxy-3-methylvalerate) into 2-oxo-3-methylpentanoate (2-oxo-3-methylvalerate) and of (2R)-2,3-dihydroxy-3-methylbutanoate (2,3-dihydroxyisovalerate) into 2-oxo-3-methylbutanoate (2-oxoisovalerate), the penultimate precursor to L-isoleucine and L-valine, respectively. The polypeptide is Dihydroxy-acid dehydratase (Methanothermobacter thermautotrophicus (strain ATCC 29096 / DSM 1053 / JCM 10044 / NBRC 100330 / Delta H) (Methanobacterium thermoautotrophicum)).